A 1220-amino-acid chain; its full sequence is Plasma membrane calcium-transporting ATPase 1 (1220 aa).

An N-acetylglycine modification is found at Gly-2. At 2 to 105 (GDMANNSVAY…KTFLQLVWEA (104 aa)) the chain is on the cytoplasmic side. 2 positions are modified to phosphoserine: Ser-8 and Ser-17. A helical membrane pass occupies residues 106–126 (LQDVTLIILEIAAIVSLGLSF). Topologically, residues 127-154 (YQPPEGDNALCGEVSVGEEEGEGETGWI) are extracellular. The helical transmembrane segment at 155 to 175 (EGAAILLSVVCVVLVTAFNDW) threads the bilayer. The Cytoplasmic segment spans residues 176–366 (SKEKQFRGLQ…KEKSVLQGKL (191 aa)). A disordered region spans residues 297–356 (EEEKKDEKKKEKKNKKQDGAIENRNKAKAQDGAAMEMQPLKSEEGGDGDEKDKKKANLPK). Composition is skewed to basic and acidic residues over residues 312 to 325 (KQDG…KAKA) and 337 to 356 (KSEE…NLPK). Position 338 is a phosphoserine (Ser-338). A helical transmembrane segment spans residues 367-386 (TKLAVQIGKAGLLMSAITVI). The Extracellular segment spans residues 387–418 (ILVLYFVIDTFWVQKRPWLAECTPIYIQYFVK). A helical transmembrane segment spans residues 419 to 439 (FFIIGVTVLVVAVPEGLPLAV). At 440 to 855 (TISLAYSVKK…RNVYDSISKF (416 aa)) the chain is on the cytoplasmic side. The active-site 4-aspartylphosphate intermediate is Asp-475. Mg(2+) is bound by residues Asp-475, Thr-477, and Asp-797. Residues 856 to 876 (LQFQLTVNVVAVIVAFTGACI) form a helical membrane-spanning segment. Residues 877–882 (TQDSPL) are Extracellular-facing. Residues 883-903 (KAVQMLWVNLIMDTLASLALA) traverse the membrane as a helical segment. The Cytoplasmic segment spans residues 904-927 (TEPPTESLLLRKPYGRNKPLISRT). Residues 928 to 948 (MMKNILGHAFYQLVVVFTLLF) traverse the membrane as a helical segment. At 949–971 (AGEKFFDIDSGRNAPLHAPPSEH) the chain is on the extracellular side. A helical membrane pass occupies residues 972-991 (YTIVFNTFVLMQLFNEINAR). Topologically, residues 992 to 1005 (KIHGERNVFEGIFN) are cytoplasmic. A helical transmembrane segment spans residues 1006–1027 (NAIFCTIVLGTFVVQIIIVQFG). At 1028–1039 (GKPFSCSELSIE) the chain is on the extracellular side. A helical membrane pass occupies residues 1040–1060 (QWLWSIFLGMGTLLWGQLIST). Residues 1061–1220 (IPTSRLKFLK…SPLHSLETSL (160 aa)) are Cytoplasmic-facing. The segment at 1100 to 1117 (LRRGQILWFRGLNRIQTQ) is calmodulin-binding subdomain A. Thr-1116 is modified (phosphothreonine; by PKC). The required for basolateral membrane targeting stretch occupies residues 1118–1220 (IRVVNAFRSS…SPLHSLETSL (103 aa)). A phosphoserine mark is found at Ser-1140 and Ser-1155. Residues 1160–1220 (PLIDDTDAED…SPLHSLETSL (61 aa)) are disordered. Residue Thr-1165 is modified to Phosphothreonine. Residues Ser-1178 and Ser-1182 each carry the phosphoserine modification. Polar residues predominate over residues 1200-1220 (MNKSATSSSPGSPLHSLETSL).

Belongs to the cation transport ATPase (P-type) (TC 3.A.3) family. Type IIB subfamily. As to quaternary structure, monomer. Dimer. Oligomer. Calmodulin binding. Interacts with PDZD11. Interacts with SLC35G1 and STIM1. Interacts with YWHAE; interacts with the monomeric and dimeric forms of the YWHAE but prefer the monomer form; this interaction inhibits calcium-transporting ATPase activity. Interacts with NPTN; this interaction stabilizes ATP2B1 and increases ATPase activity; this interaction controls T cell calcium homeostasis following T cell activation. Interacts with EPB41; regulates small intestinal calcium absorption through regulation of membrane expression of ATP2B1. Expressed in the retina, with strongest expression in the outer plexiform layer and lower expression levels in the inner nuclear layer and the inner plexiform layer. Specifically expressed in the following retinal cell types: photoreceptor cells, cone bipolar cells and horizontal cells. Expressed in osteoclasts (at protein level). Expressed at highest levels in brain, intestine, kidney, and stomach, and at lower levels in liver, lung, aorta, portal vein, urinary bladder, diaphragm, seminal vesicles and testes. Expressed in small intestinal epithelium.

Its subcellular location is the cell membrane. The protein resides in the basolateral cell membrane. The protein localises to the synapse. It localises to the presynaptic cell membrane. It is found in the cytoplasmic vesicle. Its subcellular location is the secretory vesicle. The protein resides in the synaptic vesicle membrane. It carries out the reaction Ca(2+)(in) + ATP + H2O = Ca(2+)(out) + ADP + phosphate + H(+). Catalyzes the hydrolysis of ATP coupled with the transport of calcium from the cytoplasm to the extracellular space thereby maintaining intracellular calcium homeostasis. Plays a role in blood pressure regulation through regulation of intracellular calcium concentration and nitric oxide production leading to regulation of vascular smooth muscle cells vasoconstriction. Positively regulates bone mineralization through absorption of calcium from the intestine. Plays dual roles in osteoclast differentiation and survival by regulating RANKL-induced calcium oscillations in preosteoclasts and mediating calcium extrusion in mature osteoclasts. Regulates insulin sensitivity through calcium/calmodulin signaling pathway by regulating AKT1 activation and NOS3 activation in endothelial cells. May play a role in synaptic transmission by modulating calcium and proton dynamics at the synaptic vesicles. The sequence is that of Plasma membrane calcium-transporting ATPase 1 from Mus musculus (Mouse).